The following is a 315-amino-acid chain: MSSTRIPVAIIGSGNIGTDLMIKILRCSDTLEVGAMVGIDPASDGLARAERLGVPTTAGGIDGLLALPNFKEIRIAFDATSAGAHKVHDSKLRAHGVRIIDLTPAAVGPYVVPVVNFAEHAHEPNLNMVTCGGQATIPIVHAVAGVAPVHYAEIVAAISSKSAGPGTRANIDEFTETTSRAIVEVGGAARGKAIIVLNPAEPPLIMRDTVYCFVPLDADTQAIVDAVEQRVAEVNRYVPGYRLKQHVQFEHFTENNRQNIPGLGWSTGIKVAVYLEVEGAGHYLPAYAGNLDIMTSAALTVAERIAQAQFTDQGL.

13–16 (SGNI) serves as a coordination point for NAD(+). Catalysis depends on Cys-131, which acts as the Acyl-thioester intermediate. NAD(+) is bound by residues 162 to 170 (SAGPGTRAN) and Asn-290.

This sequence belongs to the acetaldehyde dehydrogenase family.

The enzyme catalyses acetaldehyde + NAD(+) + CoA = acetyl-CoA + NADH + H(+). The chain is Acetaldehyde dehydrogenase 2 from Pseudomonas putida (strain W619).